A 526-amino-acid chain; its full sequence is CTP synthase (526 aa).

The amidoligase domain stretch occupies residues 1–264 (MPQRFIVVTG…HKLIAKELDI (264 aa)). Serine 14 provides a ligand contact to CTP. A UTP-binding site is contributed by serine 14. Residues 15–20 (GIGKGI) and aspartate 72 each bind ATP. 2 residues coordinate Mg(2+): aspartate 72 and glutamate 138. Residues 145-147 (DIE), 185-190 (KTKPTQ), and lysine 221 each bind CTP. UTP is bound by residues 185 to 190 (KTKPTQ) and lysine 221. One can recognise a Glutamine amidotransferase type-1 domain in the interval 282–526 (KIGIVGKYLG…VKAAGGKIND (245 aa)). Glycine 342 is an L-glutamine binding site. Cysteine 369 (nucleophile; for glutamine hydrolysis) is an active-site residue. L-glutamine contacts are provided by residues 370–373 (LGMQ), glutamate 393, and arginine 451. Residues histidine 499 and glutamate 501 contribute to the active site.

It belongs to the CTP synthase family. Homotetramer.

The catalysed reaction is UTP + L-glutamine + ATP + H2O = CTP + L-glutamate + ADP + phosphate + 2 H(+). It carries out the reaction L-glutamine + H2O = L-glutamate + NH4(+). The enzyme catalyses UTP + NH4(+) + ATP = CTP + ADP + phosphate + 2 H(+). The protein operates within pyrimidine metabolism; CTP biosynthesis via de novo pathway; CTP from UDP: step 2/2. With respect to regulation, allosterically activated by GTP, when glutamine is the substrate; GTP has no effect on the reaction when ammonia is the substrate. The allosteric effector GTP functions by stabilizing the protein conformation that binds the tetrahedral intermediate(s) formed during glutamine hydrolysis. Inhibited by the product CTP, via allosteric rather than competitive inhibition. Catalyzes the ATP-dependent amination of UTP to CTP with either L-glutamine or ammonia as the source of nitrogen. Regulates intracellular CTP levels through interactions with the four ribonucleotide triphosphates. The sequence is that of CTP synthase from Thermosipho africanus (strain TCF52B).